A 203-amino-acid chain; its full sequence is MSRYTGPSWKKSRRLGLSLTGTGKELARRNYVPGQHGPNNRSKLSEYGLQLAEKQKLRFSYGLGEKQFRNLFVQATKIKGGILGYNFMLLLERRLDNVVYRLGLATTRRQARQFVNHGHILVDGKRVDIPSYRVEVGQVISVREKSAKVPAILEAVESVVGRPAFVSFDADKLEGSLTRLPERDEINPEINEALVVEFYNKML.

The S4 RNA-binding domain maps to 93-156; that stretch reads RRLDNVVYRL…AKVPAILEAV (64 aa).

This sequence belongs to the universal ribosomal protein uS4 family. Part of the 30S ribosomal subunit. Contacts protein S5. The interaction surface between S4 and S5 is involved in control of translational fidelity.

Functionally, one of the primary rRNA binding proteins, it binds directly to 16S rRNA where it nucleates assembly of the body of the 30S subunit. In terms of biological role, with S5 and S12 plays an important role in translational accuracy. This chain is Small ribosomal subunit protein uS4, found in Streptococcus mutans serotype c (strain ATCC 700610 / UA159).